A 756-amino-acid chain; its full sequence is 3-O-alpha-D-glucosyl-L-rhamnose phosphorylase (756 aa).

358–359 provides a ligand contact to substrate; it reads WD. Catalysis depends on E486, which acts as the Proton donor. 590 to 591 serves as a coordination point for substrate; it reads KQ.

Belongs to the glycosyl hydrolase 65 family. In terms of assembly, monomer.

The protein localises to the cytoplasm. The enzyme catalyses 3-O-alpha-D-glucosyl-L-rhamnose + phosphate = beta-D-glucose 1-phosphate + L-rhamnopyranose. Functionally, phosphorylase showing strict alpha-1,3-regioselectivity and producing 3-O-alpha-D-glucopyranosyl-L-rhamnopyranose. Specific for L-rhamnose as acceptor and beta-D-glucose 1-phosphate as donor. Does not phosphorylate alpha,alpha-trehalose, kojibiose, nigerose, or maltose. The sequence is that of 3-O-alpha-D-glucosyl-L-rhamnose phosphorylase from Lachnoclostridium phytofermentans (strain ATCC 700394 / DSM 18823 / ISDg) (Clostridium phytofermentans).